The following is an 812-amino-acid chain: Mitochondrial intermediate peptidase (812 aa).

A mitochondrion-targeting transit peptide spans 1 to 35 (MLKLLRPRPWVCNSCLNRVAFPKPYPVGSRSTRWL). Residues 518–544 (STSEGGPAFGSPESAANDGMAASRGAS) form a disordered region. Histidine 587 is a binding site for Zn(2+). Residue glutamate 588 is part of the active site. Zn(2+) contacts are provided by histidine 591 and histidine 594.

The protein belongs to the peptidase M3 family. Zn(2+) serves as cofactor.

It localises to the mitochondrion matrix. The catalysed reaction is Release of an N-terminal octapeptide as second stage of processing of some proteins imported into the mitochondrion.. Functionally, cleaves proteins, imported into the mitochondrion, to their mature size. While most mitochondrial precursor proteins are processed to the mature form in one step by mitochondrial processing peptidase (MPP), the sequential cleavage by MIP of an octapeptide after initial processing by MPP is a required step for a subgroup of nuclear-encoded precursor proteins destined for the matrix or the inner membrane. The sequence is that of Mitochondrial intermediate peptidase (OCT1) from Pyricularia oryzae (strain 70-15 / ATCC MYA-4617 / FGSC 8958) (Rice blast fungus).